We begin with the raw amino-acid sequence, 263 residues long: 4-hydroxy-2-oxo-heptane-1,7-dioate aldolase (263 aa).

H45 functions as the Proton acceptor in the catalytic mechanism. Residue Q147 coordinates substrate. Position 149 (E149) interacts with a divalent metal cation. A174 and D175 together coordinate substrate. Position 175 (D175) interacts with a divalent metal cation.

It belongs to the HpcH/HpaI aldolase family. As to quaternary structure, homohexamer; trimer of dimers. A divalent metal cation is required as a cofactor.

The enzyme catalyses 4-hydroxy-2-oxoheptanedioate = succinate semialdehyde + pyruvate. The protein operates within aromatic compound metabolism; 4-hydroxyphenylacetate degradation; pyruvate and succinate semialdehyde from 4-hydroxyphenylacetate: step 7/7. Functionally, catalyzes the reversible retro-aldol cleavage of 4-hydroxy-2-ketoheptane-1,7-dioate (HKHD) to pyruvate and succinic semialdehyde. In Salmonella choleraesuis (strain SC-B67), this protein is 4-hydroxy-2-oxo-heptane-1,7-dioate aldolase.